Here is a 204-residue protein sequence, read N- to C-terminus: Large ribosomal subunit protein uL4 (204 aa).

The tract at residues 49–74 (AKKRGEVSGGGKKPWSQKGGGRARAG) is disordered. Over residues 55 to 71 (VSGGGKKPWSQKGGGRA) the composition is skewed to gly residues.

Belongs to the universal ribosomal protein uL4 family. As to quaternary structure, part of the 50S ribosomal subunit.

Its function is as follows. One of the primary rRNA binding proteins, this protein initially binds near the 5'-end of the 23S rRNA. It is important during the early stages of 50S assembly. It makes multiple contacts with different domains of the 23S rRNA in the assembled 50S subunit and ribosome. In terms of biological role, forms part of the polypeptide exit tunnel. The protein is Large ribosomal subunit protein uL4 of Wolinella succinogenes (strain ATCC 29543 / DSM 1740 / CCUG 13145 / JCM 31913 / LMG 7466 / NCTC 11488 / FDC 602W) (Vibrio succinogenes).